A 376-amino-acid chain; its full sequence is MTVSKFVQIRRDLHRIPEIGFKEWETQQYILDYIGTLSLEFVEVKTWKTGVIVKVNGKNPEKIIGYRADIDGLPITEETGYEFASIHEGMMHACGHDVHTTIGLGLLTKAVSERIDDDLVFLFQPAEEGPGGALPMLESEELKEWKPNIILGLHIAPEYAVGTIATKEGLLFANTSELYIDLKGKGGHAAYPHTANDMIVAASHLVTQLQSVISRNVNPLDSAVITIGKITGGTVQNIIAEKSRLEGTIRTLSVESMKRVKSRIEAIVAGIEASFQCEAIIDYGAMYHQVYNHEELTREFMQFVHKQTDMNVITCTEAMTGEDFGYMLREIPGFMFWLGVNSEYGLHHAKLKPDEEVIEKAITFLSQYVKWKGNRK.

D69 is a catalytic residue. E128 acts as the Proton acceptor in catalysis.

This sequence belongs to the peptidase M20A family. N-acetyldiaminopimelate deacetylase subfamily.

The catalysed reaction is N-acetyl-(2S,6S)-2,6-diaminopimelate + H2O = (2S,6S)-2,6-diaminopimelate + acetate. The protein operates within amino-acid biosynthesis; L-lysine biosynthesis via DAP pathway; LL-2,6-diaminopimelate from (S)-tetrahydrodipicolinate (acetylase route): step 3/3. In terms of biological role, catalyzes the conversion of N-acetyl-diaminopimelate to diaminopimelate and acetate. This is N-acetyldiaminopimelate deacetylase from Bacillus cereus (strain G9842).